A 730-amino-acid polypeptide reads, in one-letter code: MVPPAVLLPWVVLPLLGVQGGSGSKQEENLLVLTVATKQTEGFRRFRRSAQFFNYKIQVLGLDEEWKGGDDKKPAGGGQKVRLLKSALKQHADKEDLVILFIESYDVLFASGPTELLKKFKQAKSKVVFSAENYIYPDRKLEAKYPPVRDGKRFLGSGGFIGYAPNLKKLVEEWKGKDDDSDQLFYTKIFLDPEKRENINISLDHRSRIFQNLNGALDEVVLKFENARVRARNLLYDTLPVIIHGNGPTKLQLNYLGNYIPQIWTFETGCTVCDEGLRSLTGIKDEALPMILIGIFIEQPTPFLSQFFLRLRNLHYPKQRIQIFIHNHEEHHSMQVDSFVKEHSKEYLAMKVIGPDDEVENAEARNLGMDLCRKDPDCDYYFSLDAEVVLKNTETLRILIEQNKSVIAPLVSRHEKLWSNFWGALSPDGYYARSEDYVDIVQRRRVGLWNVPYISSVYMVKGKVLRSELDEGDLFHGGKLDADMAFCHNVRNQGVFMYLTNRHQFGHILSLENYQTTHLHNDLWQIFSNPEDWREKYIHENYTAALKGKLVEMPCPDVYWFPIFTDTACDELVEEMEHYGKWSTGDNTDSRIQGGYENVPTIDIHMNQIGFEREWYKFLLDYIAPITEKLYPGYYTKTQFELAFVVRYKPDEQPSLMPHHDASTFTINIALNRVGIDYEGGGCRFLRYNCSIRAPRKGWTLMHPGRLTHYHEGLPTTKGTRYIAVSFIDP.

Residues 1-20 (MVPPAVLLPWVVLPLLGVQG) form the signal peptide. 3 N-linked (GlcNAc...) asparagine glycosylation sites follow: Asn-200, Asn-403, and Asn-541. Positions 639–730 (QFELAFVVRY…RYIAVSFIDP (92 aa)) constitute a Fe2OG dioxygenase domain. 2 residues coordinate Fe cation: His-659 and Asp-661. An N-linked (GlcNAc...) asparagine glycan is attached at Asn-689. Residue His-711 coordinates Fe cation. Residue Arg-721 is part of the active site.

As to quaternary structure, homodimer. Requires Fe(2+) as cofactor. The cofactor is L-ascorbate.

The protein resides in the rough endoplasmic reticulum membrane. It catalyses the reaction L-lysyl-[collagen] + 2-oxoglutarate + O2 = (5R)-5-hydroxy-L-lysyl-[collagen] + succinate + CO2. Functionally, forms hydroxylysine residues in -Xaa-Lys-Gly- sequences in collagens. These hydroxylysines serve as sites of attachment for carbohydrate units and are essential for the stability of the intermolecular collagen cross-links. This is Procollagen-lysine,2-oxoglutarate 5-dioxygenase 1 (PLOD1) from Gallus gallus (Chicken).